A 307-amino-acid chain; its full sequence is Serine/threonine-protein phosphatase PP2A-1 catalytic subunit (307 aa).

Mn(2+) is bound by residues Asp54, His56, Asp82, and Asn114. His115 (proton donor) is an active-site residue. The Mn(2+) site is built by His164 and His238. The tract at residues 286–307 is disordered; the sequence is FEPAPRRGAEGEVNRRTPDYFL. Positions 289–307 are enriched in basic and acidic residues; it reads APRRGAEGEVNRRTPDYFL.

Belongs to the PPP phosphatase family. PP-2A subfamily. Mn(2+) is required as a cofactor.

It catalyses the reaction O-phospho-L-seryl-[protein] + H2O = L-seryl-[protein] + phosphate. The catalysed reaction is O-phospho-L-threonyl-[protein] + H2O = L-threonyl-[protein] + phosphate. This Acetabularia peniculus (Green alga) protein is Serine/threonine-protein phosphatase PP2A-1 catalytic subunit.